Reading from the N-terminus, the 469-residue chain is Citrate synthase, mitochondrial (469 aa).

Residues 1–28 (MAFFRTVTKLRSRLGQPPSLRDSVRCLQ) constitute a mitochondrion transit peptide. Residues H304, H350, and D405 contribute to the active site.

The protein belongs to the citrate synthase family. Homodimer.

It is found in the mitochondrion matrix. The enzyme catalyses oxaloacetate + acetyl-CoA + H2O = citrate + CoA + H(+). It functions in the pathway carbohydrate metabolism; tricarboxylic acid cycle; isocitrate from oxaloacetate: step 1/2. This is Citrate synthase, mitochondrial (MCSI) from Fragaria ananassa (Strawberry).